The sequence spans 176 residues: Inner membrane-spanning protein YciB (176 aa).

5 helical membrane passes run 3 to 23 (FLFDLFPIILFFAAFKLWGIF), 49 to 69 (TMLWVSLGVIVVFGGATLVLH), 72 to 92 (KFIQWKPTVLYWLFAVGLVAA), 118 to 138 (KLNLAWAAFFAALGVTNLYVV), and 149 to 169 (FKLFGTTGAIIVFVILQSLWL).

Belongs to the YciB family.

The protein localises to the cell inner membrane. In terms of biological role, plays a role in cell envelope biogenesis, maintenance of cell envelope integrity and membrane homeostasis. In Burkholderia thailandensis (strain ATCC 700388 / DSM 13276 / CCUG 48851 / CIP 106301 / E264), this protein is Inner membrane-spanning protein YciB.